The sequence spans 561 residues: MLEKFSSKFNVLKHSTTNGLLSVQINPNDIYEAVLFVRDNIGFEILADIVCVDNLYIDKEKRFSLYYIFRKISSENLCIYIDIDINQSVKSVESIYKSANWGERECFDQFGVKFENHPNLKRILNHKDFQGYPLRKDYPITKYQVLYESDDLVGEMKNEMQRAGLASEENDEFKTKYTFLNIGPSHPATHGTIRNFVALDGEKIISCVTEIGYLHRGFEKACENHSYAQIIPYTDRLNYCSAMLNNVGYAKAVEEALGLNLPDRGIFMRVILGELARIIDHEVCLGAMFVDMGGLTNYWYLYNPRERIYNFLSKLTGARFTNSFARIGGMANDFYDGWKEELLAHLKDVEKGVDDTMILIEKNRIFLDRVQNICKINANDALSYGFSGPNLRASGVSFDLRKDKPYYYYDSFDFSVPVGSEGDIYDRMFVRFFEMRESISIIRQAIKLIPEGKISVDDKDVFLPSKDQVYSNIESLINHFKLIFDGIKLPNGHFYSASEGANGELGFFIFSNSEPNPYRVKLRPPCFYALNAFSSMVQGSLIADSILNLGSLNIIAGELDR.

Positions 1-152 are NADH dehydrogenase I subunit C; sequence MLEKFSSKFN…YQVLYESDDL (152 aa). An NADH dehydrogenase I subunit D region spans residues 176–561; that stretch reads KYTFLNIGPS…LNIIAGELDR (386 aa).

The protein in the N-terminal section; belongs to the complex I 30 kDa subunit family. This sequence in the C-terminal section; belongs to the complex I 49 kDa subunit family. NDH-1 is composed of 13 different subunits. Subunits NuoB, CD, E, F, and G constitute the peripheral sector of the complex.

It localises to the cell inner membrane. The enzyme catalyses a quinone + NADH + 5 H(+)(in) = a quinol + NAD(+) + 4 H(+)(out). In terms of biological role, NDH-1 shuttles electrons from NADH, via FMN and iron-sulfur (Fe-S) centers, to quinones in the respiratory chain. The immediate electron acceptor for the enzyme in this species is believed to be ubiquinone. Couples the redox reaction to proton translocation (for every two electrons transferred, four hydrogen ions are translocated across the cytoplasmic membrane), and thus conserves the redox energy in a proton gradient. This is NADH-quinone oxidoreductase subunit C/D from Campylobacter fetus subsp. fetus (strain 82-40).